We begin with the raw amino-acid sequence, 378 residues long: Alpha-(1,3)-fucosyltransferase fut-5 (378 aa).

Residues 1-7 are Cytoplasmic-facing; it reads MKHNTLR. A helical; Signal-anchor for type II membrane protein transmembrane segment spans residues 8-28; it reads AVFQFSFFIGICTFIMIAGYS. Residues 29–378 lie on the Lumenal side of the membrane; it reads YQINYNQRMG…CDNSFATRFL (350 aa). N-linked (GlcNAc...) asparagine glycosylation is found at Asn44, Asn88, Asn105, Asn143, Asn171, and Asn307.

The protein belongs to the glycosyltransferase 10 family. Ca(2+) is required as a cofactor. N-glycosylated.

The protein localises to the golgi apparatus. Its subcellular location is the golgi stack membrane. The enzyme catalyses a beta-D-galactosyl-(1-&gt;3)-N-acetyl-beta-D-glucosaminyl derivative + GDP-beta-L-fucose = a beta-D-galactosyl-(1-&gt;3)-[alpha-L-fucosyl-(1-&gt;4)]-N-acetyl-beta-D-glucosaminyl derivative + GDP + H(+). It participates in protein modification; protein glycosylation. With respect to regulation, inhibited by Cu(2+) and Ni(2+), and to a lesser extent by EDTA, Mn(2+) and Mg(2+). Catalyzes the addition of fucose in alpha 1-3 linkage to GalNAc-beta-1-&gt;4-GlcNAc-beta-1-&gt;3-Gal-beta-1-&gt;4-Glc (LDNT)acceptor. Unlike fut-1, does not add fucose to Man-alpha-1-&gt;3-(Man-alpha-1-&gt;6)-Man-beta-1-&gt;4-GlcNAc-beta-1-&gt;4-GlcNAc-beta-1-Asn (M3), Man-alpha-1-&gt;3-(Man-alpha-1-&gt;6)-Man-beta-1-&gt;4-GlcNAc-beta-1-&gt;4-(Fuc-alpha-1-&gt;6)-GlcNAc-beta-1-Asn (M3F6) or GlcNAc-beta-1-&gt;2-Man-alpha-1-&gt;3-(GlcNAc-beta-1-&gt;2-Man-alpha-1-&gt;6)-Man-beta-1-4-GlcNAc-beta-1-&gt;4-(Fuc-alpha-1-&gt;6)-GlcNAc-beta-1-Asn (GnM3F6) acceptors. The sequence is that of Alpha-(1,3)-fucosyltransferase fut-5 from Caenorhabditis elegans.